Consider the following 166-residue polypeptide: Large ribosomal subunit protein mL41 (166 aa).

The transit peptide at 1–26 (MQNCIKLVPLALKCPQRAISTSAVLD) directs the protein to the mitochondrion.

Belongs to the mitochondrion-specific ribosomal protein mL41 family. As to quaternary structure, component of the mitochondrial ribosome large subunit (39S) which comprises a 16S rRNA and about 50 distinct proteins.

The protein resides in the mitochondrion. In Drosophila pseudoobscura pseudoobscura (Fruit fly), this protein is Large ribosomal subunit protein mL41 (mRpL41).